The primary structure comprises 331 residues: 2-hydroxyacid dehydrogenase homolog (331 aa).

Residues 154-155, 234-236, and D260 each bind NAD(+); these read HI and TSR. Residue R236 is part of the active site. E265 is an active-site residue. The active-site Proton donor is the H297. 297–300 serves as a coordination point for NAD(+); it reads HQAF.

This sequence belongs to the D-isomer specific 2-hydroxyacid dehydrogenase family.

The sequence is that of 2-hydroxyacid dehydrogenase homolog (ddh) from Zymomonas mobilis subsp. mobilis (strain ATCC 31821 / ZM4 / CP4).